The primary structure comprises 103 residues: Small ribosomal subunit protein uS10 (103 aa).

The protein belongs to the universal ribosomal protein uS10 family. As to quaternary structure, part of the 30S ribosomal subunit.

Functionally, involved in the binding of tRNA to the ribosomes. This is Small ribosomal subunit protein uS10 from Buchnera aphidicola subsp. Cinara cedri (strain Cc).